We begin with the raw amino-acid sequence, 348 residues long: L-threonine 3-dehydrogenase (348 aa).

Cysteine 42 contributes to the Zn(2+) binding site. Residues threonine 44 and histidine 47 each act as charge relay system in the active site. Zn(2+) is bound by residues histidine 67, glutamate 68, cysteine 97, cysteine 100, cysteine 103, and cysteine 111. Residues leucine 179, glutamate 199, arginine 204, 266-268 (LGL), and 291-292 (IT) contribute to the NAD(+) site.

The protein belongs to the zinc-containing alcohol dehydrogenase family. Homotetramer. It depends on Zn(2+) as a cofactor.

The protein localises to the cytoplasm. The catalysed reaction is L-threonine + NAD(+) = (2S)-2-amino-3-oxobutanoate + NADH + H(+). It functions in the pathway amino-acid degradation; L-threonine degradation via oxydo-reductase pathway; glycine from L-threonine: step 1/2. Functionally, catalyzes the NAD(+)-dependent oxidation of L-threonine to 2-amino-3-ketobutyrate. To a lesser extent, also catalyzes the oxidation of L-serine, D-threonine, butan-2,3-diol, butan-1,2-diol, and propan-1,2-diol and cannot oxidize other L-amino acids. Cannot utilize NADP(H) instead of NAD(H). The chain is L-threonine 3-dehydrogenase from Pyrococcus furiosus (strain ATCC 43587 / DSM 3638 / JCM 8422 / Vc1).